A 591-amino-acid chain; its full sequence is Asparagine synthetase [glutamine-hydrolyzing] 2 (591 aa).

Catalysis depends on Cys-2, which acts as the For GATase activity. In terms of domain architecture, Glutamine amidotransferase type-2 spans 2 to 185 (CGILAVLGVA…PGHLYSSKTG (184 aa)). L-glutamine contacts are provided by residues 50 to 54 (RLAIV), 75 to 77 (NGE), and Asp-98. The Asparagine synthetase domain maps to 193–516 (PPWFSESIPS…PKNAARLTVP (324 aa)). ATP is bound by residues Leu-231, Ile-267, and 341 to 342 (SG).

Expressed in companion cells of leaf sheath vascular bundles, and phloem-parenchyma cells, nucellar projections and nucellar epidermis of dorsal vascular bundles of grains.

It catalyses the reaction L-aspartate + L-glutamine + ATP + H2O = L-asparagine + L-glutamate + AMP + diphosphate + H(+). It participates in amino-acid biosynthesis; L-asparagine biosynthesis; L-asparagine from L-aspartate (L-Gln route): step 1/1. Essential for nitrogen assimilation, distribution and remobilization within the plant via the phloem. In Oryza sativa subsp. japonica (Rice), this protein is Asparagine synthetase [glutamine-hydrolyzing] 2.